Here is a 231-residue protein sequence, read N- to C-terminus: Small ribosomal subunit protein uS3 (231 aa).

Positions 39-108 (IKNYIKKRYK…EISISVLEVK (70 aa)) constitute a KH type-2 domain.

It belongs to the universal ribosomal protein uS3 family. Part of the 30S ribosomal subunit. Forms a tight complex with proteins S10 and S14.

Binds the lower part of the 30S subunit head. Binds mRNA in the 70S ribosome, positioning it for translation. The polypeptide is Small ribosomal subunit protein uS3 (Aquifex pyrophilus).